A 192-amino-acid chain; its full sequence is Inosine triphosphate pyrophosphatase (192 aa).

8–13 (TTNLKK) is a binding site for ITP. Glutamate 34 contributes to the Mg(2+) binding site. ITP contacts are provided by residues lysine 46, 64–65 (DT), lysine 81, 141–144 (EGFD), lysine 164, and 169–170 (HR).

It belongs to the HAM1 NTPase family. In terms of assembly, homodimer. It depends on Mg(2+) as a cofactor. Mn(2+) serves as cofactor.

The protein resides in the cytoplasm. It localises to the nucleus. It catalyses the reaction ITP + H2O = IMP + diphosphate + H(+). The catalysed reaction is dITP + H2O = dIMP + diphosphate + H(+). The enzyme catalyses XTP + H2O = XMP + diphosphate + H(+). In terms of biological role, pyrophosphatase that hydrolyzes non-canonical purine nucleotides such as inosine triphosphate (ITP), deoxyinosine triphosphate (dITP) or xanthosine 5'-triphosphate (XTP) to their respective monophosphate derivatives. The enzyme does not distinguish between the deoxy- and ribose forms. Probably excludes non-canonical purines from RNA and DNA precursor pools, thus preventing their incorporation into RNA and DNA and avoiding chromosomal lesions. The chain is Inosine triphosphate pyrophosphatase from Encephalitozoon cuniculi (strain GB-M1) (Microsporidian parasite).